The sequence spans 927 residues: Autophagy-related protein 18h (927 aa).

2 disordered regions span residues 1-25 (MKSNSKVNINNNGDNHNQTKNNGTN) and 333-353 (DGPGPSLSSSPGRKVGRVGSH). Over residues 335–344 (PGPSLSSSPG) the composition is skewed to low complexity. 2 WD repeats span residues 379 to 419 (AHTS…TKNG) and 441 to 482 (MTSA…NVLE). 2 disordered regions span residues 750–788 (NRGFSGERDSDSSSSSDPGQVKEMHPFNGMVYPEDEERR) and 844–927 (IENS…SEEG). Residues 846–859 (NSSGISGDSNVSSN) show a composition bias toward low complexity. The segment covering 896–907 (ETEHKDAPSDGK) has biased composition (basic and acidic residues).

The protein belongs to the WD repeat PROPPIN family. Component of the PI(3,5)P2 regulatory complex at least composed of ATG18, SAC/FIG4, FAB1 and VAC14. As to expression, expressed in roots, flowers and leaves.

It localises to the preautophagosomal structure membrane. The protein resides in the vacuole membrane. The PI(3,5)P2 regulatory complex regulates both the synthesis and turnover of phosphatidylinositol 3,5-bisphosphate (PtdIns(3,5)P2). Required for autophagy. This chain is Autophagy-related protein 18h (ATG18H), found in Arabidopsis thaliana (Mouse-ear cress).